A 59-amino-acid chain; its full sequence is Large ribosomal subunit protein uL30 (59 aa).

It belongs to the universal ribosomal protein uL30 family. In terms of assembly, part of the 50S ribosomal subunit.

The chain is Large ribosomal subunit protein uL30 from Solibacter usitatus (strain Ellin6076).